Reading from the N-terminus, the 335-residue chain is Thioredoxin-related transmembrane protein 4 (335 aa).

Residues 1–20 (MTGGFCVPVLLAAWLAAAAA) form the signal peptide. The Thioredoxin domain occupies 26 to 133 (AALPAEESRV…YEDLQNYILE (108 aa)). Catalysis depends on nucleophile residues cysteine 60 and cysteine 63. Residues cysteine 60 and cysteine 63 are joined by a disulfide bond. The chain crosses the membrane as a helical span at residues 186 to 206 (VFFVIATLVFGLFMGLILVVI). Residues 222 to 316 (CEQEQSTGEA…EDGAHPADTQ (95 aa)) form a disordered region. Positions 238-280 (QDAEEEKDDSNEEENKDSLVDDEEEKEDIGDEDEGEEDEEEDN) are enriched in acidic residues. Residues serine 247 and serine 255 each carry the phosphoserine modification. Residues 286 to 298 (AEERSDTNERAVV) show a composition bias toward basic and acidic residues.

It is found in the nucleus inner membrane. Its subcellular location is the endoplasmic reticulum membrane. This is Thioredoxin-related transmembrane protein 4 (Tmx4) from Mus musculus (Mouse).